Here is a 123-residue protein sequence, read N- to C-terminus: uncharacterized protein (123 aa).

Residues 5 to 25 traverse the membrane as a helical segment; it reads GTLVIIFAIVLILCIMLLFFY. Residues 32-53 form a disordered region; that stretch reads KPSVLPPPIPPPTPPPSKKKYD. The span at 35–47 shows a compositional bias: pro residues; sequence VLPPPIPPPTPPP.

This sequence belongs to the asfivirus CP123L family.

The protein resides in the host membrane. Its subcellular location is the virion. This is an uncharacterized protein from Ornithodoros (relapsing fever ticks).